A 338-amino-acid polypeptide reads, in one-letter code: Solute carrier family 35 member G5 (338 aa).

The tract at residues 1–28 is disordered; the sequence is MAGSHPYFNLPDSTHPSPPSGPPSLRWH. A run of 9 helical transmembrane segments spans residues 37–57, 67–87, 105–125, 160–180, 190–210, 221–241, 250–270, 281–301, and 310–330; these read TNGL…VGPL, LPSL…ALLL, CFCA…VQVV, CGLL…LWTL, ALGY…LLVY, TVAF…LFVL, LLSW…FTCV, LVCA…YYML, and IMGA…NLSC. In terms of domain architecture, EamA 1 spans 49 to 174; the sequence is LPAGFVGPLS…SILGLIIIVG (126 aa). Residues 272–325 enclose the EamA 2 domain; it reads YAVTKAHPALVCAVLHSEVVVALILQYYMLPETVAPSDIMGAGVVLGNITIIPA.

It belongs to the SLC35G solute transporter family.

It is found in the membrane. This is Solute carrier family 35 member G5 (SLC35G5) from Gorilla gorilla gorilla (Western lowland gorilla).